The following is a 174-amino-acid chain: Gamma-crystallin S (174 aa).

Beta/gamma crystallin 'Greek key' domains are found at residues G2–S40 and G41–H83. The segment at F84 to E89 is connecting peptide. 2 Beta/gamma crystallin 'Greek key' domains span residues Y90–D130 and G131–M173.

This sequence belongs to the beta/gamma-crystallin family.

In terms of biological role, crystallins are the dominant structural components of the vertebrate eye lens. This is Gamma-crystallin S (crygs) from Cyprinus carpio (Common carp).